Reading from the N-terminus, the 188-residue chain is Acireductone dioxygenase (188 aa).

4 residues coordinate Fe(2+): His97, His99, Glu103, and His141. Residues His97, His99, Glu103, and His141 each contribute to the Ni(2+) site.

It belongs to the acireductone dioxygenase (ARD) family. Monomer. Fe(2+) serves as cofactor. The cofactor is Ni(2+).

The enzyme catalyses 1,2-dihydroxy-5-(methylsulfanyl)pent-1-en-3-one + O2 = 3-(methylsulfanyl)propanoate + CO + formate + 2 H(+). The catalysed reaction is 1,2-dihydroxy-5-(methylsulfanyl)pent-1-en-3-one + O2 = 4-methylsulfanyl-2-oxobutanoate + formate + 2 H(+). The protein operates within amino-acid biosynthesis; L-methionine biosynthesis via salvage pathway; L-methionine from S-methyl-5-thio-alpha-D-ribose 1-phosphate: step 5/6. Functionally, catalyzes 2 different reactions between oxygen and the acireductone 1,2-dihydroxy-3-keto-5-methylthiopentene (DHK-MTPene) depending upon the metal bound in the active site. Fe-containing acireductone dioxygenase (Fe-ARD) produces formate and 2-keto-4-methylthiobutyrate (KMTB), the alpha-ketoacid precursor of methionine in the methionine recycle pathway. Ni-containing acireductone dioxygenase (Ni-ARD) produces methylthiopropionate, carbon monoxide and formate, and does not lie on the methionine recycle pathway. This Xylella fastidiosa (strain 9a5c) protein is Acireductone dioxygenase.